We begin with the raw amino-acid sequence, 214 residues long: ATP-dependent Clp protease proteolytic subunit (214 aa).

S110 (nucleophile) is an active-site residue. The active site involves H135.

Belongs to the peptidase S14 family. In terms of assembly, fourteen ClpP subunits assemble into 2 heptameric rings which stack back to back to give a disk-like structure with a central cavity, resembling the structure of eukaryotic proteasomes.

It localises to the cytoplasm. The enzyme catalyses Hydrolysis of proteins to small peptides in the presence of ATP and magnesium. alpha-casein is the usual test substrate. In the absence of ATP, only oligopeptides shorter than five residues are hydrolyzed (such as succinyl-Leu-Tyr-|-NHMec, and Leu-Tyr-Leu-|-Tyr-Trp, in which cleavage of the -Tyr-|-Leu- and -Tyr-|-Trp bonds also occurs).. Cleaves peptides in various proteins in a process that requires ATP hydrolysis. Has a chymotrypsin-like activity. Plays a major role in the degradation of misfolded proteins. The protein is ATP-dependent Clp protease proteolytic subunit of Legionella pneumophila (strain Paris).